The sequence spans 874 residues: Probable cation-transporting P-type ATPase (874 aa).

The Cytoplasmic portion of the chain corresponds to 1–41; sequence MNSWTGLSEQAAIKSRQEHGANFLPEKKATPFWLLFLQQFK. The chain crosses the membrane as a helical span at residues 42-62; the sequence is SLVVILLLLASLLSFVVAIVS. Residues 63–79 lie on the Extracellular side of the membrane; the sequence is GLRSNWNFNHDLIIEWV. The chain crosses the membrane as a helical span at residues 80 to 100; the sequence is QPFIILLTVFANSLIGSIQEF. The Cytoplasmic portion of the chain corresponds to 101–237; the sequence is KAQKSASALK…TKLSPLQQKL (137 aa). A helical membrane pass occupies residues 238-257; the sequence is EKIGKWFSWFGLGLFAVVFL. Residues 258–275 lie on the Extracellular side of the membrane; sequence VQTALLGFDNFTNNWSIA. A helical transmembrane segment spans residues 276-293; that stretch reads LIGAIALVVAIIPEGLVT. Over 294-644 the chain is Cytoplasmic; that stretch reads FINVIFALSV…EEGRKTFLTC (351 aa). Residue aspartate 331 is the 4-aspartylphosphate intermediate of the active site. 2 residues coordinate Mg(2+): aspartate 589 and aspartate 593. Residues 645–664 traverse the membrane as a helical segment; it reads KRVLLNLFLTSIAGTVVVLL. Over 665–687 the chain is Extracellular; it reads GLFILGQVFKTNLLQQGHDFQVF. A helical membrane pass occupies residues 688-708; it reads SPTQLLIINLFVHGFPAVALA. Residues 709-726 are Cytoplasmic-facing; the sequence is VQPVKEKLMVGSFSTKNL. Residues 727-749 traverse the membrane as a helical segment; it reads FYNRQGFDLIWQSLFLSFLTLLF. The Extracellular portion of the chain corresponds to 750–770; it reads YSLGIIYAINNRDLQTSGDLI. The chain crosses the membrane as a helical span at residues 771-790; that stretch reads NRAGSTCGFFILGASAALNS. Residues 791-803 lie on the Cytoplasmic side of the membrane; that stretch reads LNLMVDKPLLMTN. Residues 804 to 826 form a helical membrane-spanning segment; that stretch reads PWFFKLVWIGSLASILVFLLIIF. At 827–844 the chain is on the extracellular side; that stretch reads INPLGLVFNVLQDLTNHP. The chain crosses the membrane as a helical span at residues 845–865; the sequence is VLISYSFGGVILYMGMNEVVK. The Cytoplasmic segment spans residues 866 to 874; it reads LIRLGYGNI.

It belongs to the cation transport ATPase (P-type) (TC 3.A.3) family. Type II subfamily.

The protein localises to the cell membrane. The enzyme catalyses ATP + H2O = ADP + phosphate + H(+). Functionally, could mediate calcium influx. This chain is Probable cation-transporting P-type ATPase (pacL), found in Mycoplasma genitalium (strain ATCC 33530 / DSM 19775 / NCTC 10195 / G37) (Mycoplasmoides genitalium).